A 461-amino-acid chain; its full sequence is Cysteine--tRNA ligase (461 aa).

Cysteine 28 lines the Zn(2+) pocket. Residues 30 to 40 carry the 'HIGH' region motif; the sequence is ITVYDLCHIGH. 3 residues coordinate Zn(2+): cysteine 209, histidine 234, and glutamate 238. Positions 266-270 match the 'KMSKS' region motif; the sequence is KMSKS. Lysine 269 is an ATP binding site.

The protein belongs to the class-I aminoacyl-tRNA synthetase family. In terms of assembly, monomer. Requires Zn(2+) as cofactor.

Its subcellular location is the cytoplasm. It catalyses the reaction tRNA(Cys) + L-cysteine + ATP = L-cysteinyl-tRNA(Cys) + AMP + diphosphate. The protein is Cysteine--tRNA ligase of Pectobacterium carotovorum subsp. carotovorum (strain PC1).